The sequence spans 156 residues: ATP synthase subunit b (156 aa).

A helical transmembrane segment spans residues 7–29 (LLGQAISFAMFVWFCMKYVWPPI).

Belongs to the ATPase B chain family. In terms of assembly, F-type ATPases have 2 components, F(1) - the catalytic core - and F(0) - the membrane proton channel. F(1) has five subunits: alpha(3), beta(3), gamma(1), delta(1), epsilon(1). F(0) has three main subunits: a(1), b(2) and c(10-14). The alpha and beta chains form an alternating ring which encloses part of the gamma chain. F(1) is attached to F(0) by a central stalk formed by the gamma and epsilon chains, while a peripheral stalk is formed by the delta and b chains.

It is found in the cell inner membrane. F(1)F(0) ATP synthase produces ATP from ADP in the presence of a proton or sodium gradient. F-type ATPases consist of two structural domains, F(1) containing the extramembraneous catalytic core and F(0) containing the membrane proton channel, linked together by a central stalk and a peripheral stalk. During catalysis, ATP synthesis in the catalytic domain of F(1) is coupled via a rotary mechanism of the central stalk subunits to proton translocation. In terms of biological role, component of the F(0) channel, it forms part of the peripheral stalk, linking F(1) to F(0). The polypeptide is ATP synthase subunit b (Vibrio vulnificus (strain CMCP6)).